The sequence spans 449 residues: Trigger factor (449 aa).

One can recognise a PPIase FKBP-type domain in the interval 173-258 (GDRVTLDFVG…LKKVEWAHLP (86 aa)).

It belongs to the FKBP-type PPIase family. Tig subfamily.

It localises to the cytoplasm. It carries out the reaction [protein]-peptidylproline (omega=180) = [protein]-peptidylproline (omega=0). Functionally, involved in protein export. Acts as a chaperone by maintaining the newly synthesized protein in an open conformation. Functions as a peptidyl-prolyl cis-trans isomerase. This is Trigger factor from Cupriavidus metallidurans (strain ATCC 43123 / DSM 2839 / NBRC 102507 / CH34) (Ralstonia metallidurans).